The following is a 304-amino-acid chain: Uricase (304 aa).

A2 is subject to N-acetylalanine. An N6-acetyllysine; alternate mark is found at K10 and K23. 2 positions are modified to N6-succinyllysine; alternate: K10 and K23. K23 functions as the Charge relay system in the catalytic mechanism. Residues K27 and K36 each carry the N6-acetyllysine modification. Phosphoserine is present on residues S39 and S63. The Charge relay system role is filled by T68. 2 residues coordinate urate: T68 and D69. N6-acetyllysine is present on residues K118, K122, and K164. F170 serves as a coordination point for urate. N6-acetyllysine occurs at positions 175 and 185. R187 serves as a coordination point for urate. K221 and K228 each carry N6-acetyllysine; alternate. N6-succinyllysine; alternate is present on residues K221 and K228. Position 232 is a phosphoserine (S232). V235, Q236, and N262 together coordinate urate. H264 acts as the Charge relay system in catalysis. K278 carries the N6-acetyllysine modification. Phosphotyrosine is present on Y289. Residues 302-304 carry the Microbody targeting signal motif; it reads SRL.

Belongs to the uricase family. In terms of assembly, homotetramer.

The protein localises to the peroxisome. The enzyme catalyses urate + O2 + H2O = 5-hydroxyisourate + H2O2. It participates in purine metabolism; urate degradation; (S)-allantoin from urate: step 1/3. Catalyzes the oxidation of uric acid to 5-hydroxyisourate, which is further processed to form (S)-allantoin. The polypeptide is Uricase (UOX) (Sus scrofa (Pig)).